Reading from the N-terminus, the 913-residue chain is Trafficking kinesin-binding protein 2 (913 aa).

Positions 11–21 (SQTGEENLMSS) are enriched in polar residues. Positions 11 to 31 (SQTGEENLMSSNHRDSESITD) are disordered. The HAP1 N-terminal domain occupies 48–353 (EEQLPQYKLR…QEEIKELRNK (306 aa)). Positions 134–355 (QALLKRNHVL…EIKELRNKAG (222 aa)) form a coiled coil. Positions 359–507 (HLCFSQAYGV…KQFFAEEWER (149 aa)) are interaction with HGS. The tract at residues 442–478 (ESGVQQTEDKTLPNQGSSTEVPGNSHPRDPPGLPEDS) is disordered. A compositionally biased stretch (polar residues) spans 453-463 (LPNQGSSTEVP). Residues 502–519 (AEEWERKLQILAEQEEEV) are a coiled coil. Low complexity-rich tracts occupy residues 688 to 704 (SSGFPSLSCGSSAGSAS) and 780 to 789 (PSQSPCSSPV). Disordered stretches follow at residues 688 to 707 (SSGFPSLSCGSSAGSASNTA) and 769 to 790 (ALATPSTPPNSPSQSPCSSPVP).

This sequence belongs to the milton family. Interacts with RHOT1/Miro-1 and RHOT2/Miro-2. Interacts with GABA-A receptor and O-GlcNAc transferase. Interacts with HGS. In terms of processing, O-glycosylated. Present in heart and brain (at protein level).

It is found in the cytoplasm. The protein localises to the early endosome. The protein resides in the mitochondrion. May regulate endosome-to-lysosome trafficking of membrane cargo, including EGFR. The polypeptide is Trafficking kinesin-binding protein 2 (Trak2) (Rattus norvegicus (Rat)).